An 824-amino-acid chain; its full sequence is Cell division cycle protein 27 homolog (824 aa).

TPR repeat units follow at residues 6 to 35 (EPVQ…YAEV), 38 to 65 (EEAL…KGHS), 67 to 99 (TTPQ…VFNK), and 115 to 145 (CFTL…LSLN). A phosphothreonine mark is found at T205, T209, and T244. The segment at 287 to 422 (LETPSPGDGS…TNKGGITQPN (136 aa)) is disordered. Phosphoserine is present on S291. T313 carries the phosphothreonine modification. The segment covering 326–341 (QTGTKSVFSQSGNSRE) has biased composition (polar residues). Residue S339 is modified to Phosphoserine. Residues 348-361 (QTQSSGPQTSTTPQ) show a composition bias toward low complexity. Residues 362-371 (VLSPTITSPP) show a composition bias toward polar residues. T366 carries the post-translational modification Phosphothreonine. A phosphoserine mark is found at S379 and S386. Positions 380–390 (RLFTSDSSTTK) are enriched in polar residues. The span at 395 to 413 (KLKMKFPPKIPNRKTKSKT) shows a compositional bias: basic residues. The residue at position 426 (S426) is a Phosphoserine. Position 430 is a phosphothreonine (T430). S435 and S438 each carry phosphoserine. T446 is modified (phosphothreonine). TPR repeat units lie at residues 465–495 (LLRE…PSHH), 499–528 (GWVL…VRRI), 533–563 (VEGM…TDMD), 567–598 (PEAW…QVDP), 601–631 (AYAY…IRVN), 635–667 (YNAW…INPQ), 670–702 (VLLC…DPKN), 704–734 (LCKF…QIVP), and 737–768 (SLVY…DLDP). A disordered region spans residues 781–824 (KRYLPDDEEPITQEEQIMGTDESQESSMTDADDTQLHAAESDEF). S821 carries the post-translational modification Phosphoserine.

The protein belongs to the APC3/CDC27 family. In terms of assembly, homodimer. The mammalian APC/C is composed at least of 14 distinct subunits ANAPC1, ANAPC2, CDC27/APC3, ANAPC4, ANAPC5, CDC16/APC6, ANAPC7, CDC23/APC8, ANAPC10, ANAPC11, CDC26/APC12, ANAPC13, ANAPC15 and ANAPC16 that assemble into a complex of at least 19 chains with a combined molecular mass of around 1.2 MDa; APC/C interacts with FZR1 and FBXO5. Interacts with RB. Interacts with FAM168B/MANI. Interacts with MCPH1. Phosphorylated. Phosphorylation on Ser-426 and Thr-446 occurs specifically during mitosis.

It localises to the nucleus. The protein localises to the cytoplasm. It is found in the cytoskeleton. The protein resides in the spindle. It participates in protein modification; protein ubiquitination. Component of the anaphase promoting complex/cyclosome (APC/C), a cell cycle-regulated E3 ubiquitin ligase that controls progression through mitosis and the G1 phase of the cell cycle. The APC/C complex acts by mediating ubiquitination and subsequent degradation of target proteins: it mainly mediates the formation of 'Lys-11'-linked polyubiquitin chains and, to a lower extent, the formation of 'Lys-48'- and 'Lys-63'-linked polyubiquitin chains. The APC/C complex catalyzes assembly of branched 'Lys-11'-/'Lys-48'-linked branched ubiquitin chains on target proteins. This chain is Cell division cycle protein 27 homolog (CDC27), found in Homo sapiens (Human).